A 364-amino-acid polypeptide reads, in one-letter code: Geissoschizine synthase (364 aa).

Positions 24-343 (GILHPIKFSR…DYLSTAMERI (320 aa)) constitute an Enoyl reductase (ER) domain. Cys51 serves as a coordination point for Zn(2+). Asn52 lines the NADP(+) pocket. Residues His73, Glu74, Cys104, Cys107, Cys110, Cys118, and Cys168 each contribute to the Zn(2+) site. The NADP(+) site is built by Leu194, Gly196, Leu197, Ser216, Thr217, Ser218, Lys221, Arg261, Val280, Ala282, Ser304, Thr306, and Arg351.

Belongs to the zinc-containing alcohol dehydrogenase family. Class-III subfamily. Homodimer. The cofactor is Zn(2+).

The catalysed reaction is (19E)-geissoschizine + NADP(+) = 4,21-dehydrogeissoschizine + NADPH. It carries out the reaction (19E)-geissoschizine + NADPH + H(+) = (16R,19E)-isositsirikine + NADP(+). The enzyme catalyses (19E)-geissoschizine + NADPH + H(+) = (16R,19Z)-isositsirikine + NADP(+). It participates in alkaloid biosynthesis. An alcohol dehydrogenase involved in the biosynthesis of seco-iridoid and derivatives monoterpenoid indole alkaloids natural products. Catalyzes the production of geissoschizine and its conversion to (16R)-E-isositsirikine and (16R)-Z-isositsirikine. In Alstonia scholaris (Dogbane), this protein is Geissoschizine synthase.